A 513-amino-acid chain; its full sequence is Xylose import ATP-binding protein XylG (513 aa).

2 consecutive ABC transporter domains span residues 5 to 242 and 259 to 505; these read LEMK…VGRE and LRVE…LRSE. An ATP-binding site is contributed by 37–44; it reads GENGSGKS.

Belongs to the ABC transporter superfamily. Xylose importer (TC 3.A.1.2.4) family. In terms of assembly, the complex is composed of two ATP-binding proteins (XylG), two transmembrane proteins (XylH) and a solute-binding protein (XylF).

Its subcellular location is the cell inner membrane. It catalyses the reaction D-xylose(out) + ATP + H2O = D-xylose(in) + ADP + phosphate + H(+). Part of the ABC transporter complex XylFGH involved in xylose import. Responsible for energy coupling to the transport system. This is Xylose import ATP-binding protein XylG from Pectobacterium atrosepticum (strain SCRI 1043 / ATCC BAA-672) (Erwinia carotovora subsp. atroseptica).